We begin with the raw amino-acid sequence, 253 residues long: Claudin domain-containing protein 1 (253 aa).

Residues 5-25 (FATAFVIACVLSLISTIYMAA) traverse the membrane as a helical segment. Residues N42 and N72 are each glycosylated (N-linked (GlcNAc...) asparagine). 3 consecutive transmembrane segments (helical) span residues 141 to 161 (FLLP…GLCA), 175 to 195 (ILHL…VAGI), and 216 to 236 (FCLA…FIWA).

The protein belongs to the PMP-22/EMP/MP20 family. In terms of tissue distribution, in the brain, highly expressed in endothelial cells of the cerebellum compared to other regions (at protein level).

The protein resides in the cell junction. The protein localises to the tight junction. It is found in the cell membrane. Its function is as follows. Plays a role in negatively regulating the permeability of cells to small molecules. This is Claudin domain-containing protein 1 (Cldnd1) from Mus musculus (Mouse).